The following is a 292-amino-acid chain: Protease HtpX (292 aa).

2 helical membrane passes run isoleucine 5–valine 25 and serine 34–leucine 54. Residue histidine 140 coordinates Zn(2+). Residue glutamate 141 is part of the active site. Residue histidine 144 participates in Zn(2+) binding. A run of 2 helical transmembrane segments spans residues leucine 155–isoleucine 175 and isoleucine 193–phenylalanine 213. Position 218 (glutamate 218) interacts with Zn(2+).

Belongs to the peptidase M48B family. It depends on Zn(2+) as a cofactor.

It is found in the cell inner membrane. The polypeptide is Protease HtpX (Xanthomonas oryzae pv. oryzae (strain MAFF 311018)).